The chain runs to 199 residues: Recombination protein RecR (199 aa).

Residues 57 to 72 (CSSCRTFTEESLCPIC) form a C4-type zinc finger. Residues 81 to 176 (DLICVVETPA…NVSRIAHGVP (96 aa)) form the Toprim domain.

The protein belongs to the RecR family.

In terms of biological role, may play a role in DNA repair. It seems to be involved in an RecBC-independent recombinational process of DNA repair. It may act with RecF and RecO. This Shewanella loihica (strain ATCC BAA-1088 / PV-4) protein is Recombination protein RecR.